Here is a 506-residue protein sequence, read N- to C-terminus: Probable alpha-L-arabinofuranosidase B (506 aa).

An N-terminal signal peptide occupies residues 1-26 (MLPQLSIERASVFALGLIATGSLVVA). Positions 27 to 343 (GPCDIYSAGG…ANIVAAKYAT (317 aa)) are catalytic. 3 disulfide bridges follow: cysteine 29–cysteine 39, cysteine 89–cysteine 94, and cysteine 184–cysteine 185. Aspartate 227 is a binding site for substrate. Glutamate 229 serves as the catalytic Nucleophile. A substrate-binding site is contributed by asparagine 230. The N-linked (GlcNAc...) asparagine glycan is linked to asparagine 240. Residue glycine 304 participates in substrate binding. Aspartate 305 functions as the Proton donor in the catalytic mechanism. Residues 344-506 (ASLTSGPKLT…VSWVISTGFA (163 aa)) form an ABD region. Cysteine 409 and cysteine 447 are disulfide-bonded. Histidine 424, asparagine 426, phenylalanine 427, aspartate 443, histidine 471, leucine 476, and aspartate 496 together coordinate substrate.

It belongs to the glycosyl hydrolase 54 family.

It is found in the secreted. It carries out the reaction Hydrolysis of terminal non-reducing alpha-L-arabinofuranoside residues in alpha-L-arabinosides.. It functions in the pathway glycan metabolism; L-arabinan degradation. Alpha-L-arabinofuranosidase involved in the degradation of arabinoxylan, a major component of plant hemicellulose. Able to hydrolyze 1,5-, 1,3- and 1,2-alpha-linkages not only in L-arabinofuranosyl oligosaccharides, but also in polysaccharides containing terminal non-reducing L-arabinofuranoses in side chains, like L-arabinan, arabinogalactan and arabinoxylan. In Aspergillus fumigatus (strain ATCC MYA-4609 / CBS 101355 / FGSC A1100 / Af293) (Neosartorya fumigata), this protein is Probable alpha-L-arabinofuranosidase B (abfB).